The chain runs to 129 residues: Fluoride-specific ion channel FluC (129 aa).

4 helical membrane-spanning segments follow: residues 8-28, 36-56, 71-91, and 103-123; these read FFCV…MVLA, AFPF…GLLL, FLGV…VEVV, and ALHI…AMML. 2 residues coordinate Na(+): Gly-78 and Thr-81.

It belongs to the fluoride channel Fluc/FEX (TC 1.A.43) family.

It localises to the cell inner membrane. The enzyme catalyses fluoride(in) = fluoride(out). Na(+) is not transported, but it plays an essential structural role and its presence is essential for fluoride channel function. In terms of biological role, fluoride-specific ion channel. Important for reducing fluoride concentration in the cell, thus reducing its toxicity. The protein is Fluoride-specific ion channel FluC of Idiomarina loihiensis (strain ATCC BAA-735 / DSM 15497 / L2-TR).